A 182-amino-acid polypeptide reads, in one-letter code: Putative manganese efflux pump MntP 1 (182 aa).

The next 6 membrane-spanning stretches (helical) occupy residues 4–24 (LLLL…GLGA), 42–62 (IFQG…IAFI), 63–83 (SAFD…KMIY), 103–123 (LILS…LHLI), 127–147 (VFLS…LGVL), and 162–182 (ILGG…HLFF).

The protein belongs to the MntP (TC 9.B.29) family.

The protein resides in the cell inner membrane. Probably functions as a manganese efflux pump. This is Putative manganese efflux pump MntP 1 from Wolinella succinogenes (strain ATCC 29543 / DSM 1740 / CCUG 13145 / JCM 31913 / LMG 7466 / NCTC 11488 / FDC 602W) (Vibrio succinogenes).